A 396-amino-acid polypeptide reads, in one-letter code: Small ribosomal subunit protein mS27 (396 aa).

This sequence belongs to the mitochondrion-specific ribosomal protein mS27 family. Component of the mitochondrial small ribosomal subunit (mt-SSU). Mature N.crassa 74S mitochondrial ribosomes consist of a small (37S) and a large (54S) subunit. The 37S small subunit contains a 16S ribosomal RNA (16S mt-rRNA) and 32 different proteins. The 54S large subunit contains a 23S rRNA (23S mt-rRNA) and 42 different proteins.

The protein localises to the mitochondrion. Functionally, component of the mitochondrial ribosome (mitoribosome), a dedicated translation machinery responsible for the synthesis of mitochondrial genome-encoded proteins, including at least some of the essential transmembrane subunits of the mitochondrial respiratory chain. The mitoribosomes are attached to the mitochondrial inner membrane and translation products are cotranslationally integrated into the membrane. The chain is Small ribosomal subunit protein mS27 (mrp13) from Neurospora crassa (strain ATCC 24698 / 74-OR23-1A / CBS 708.71 / DSM 1257 / FGSC 987).